The chain runs to 392 residues: 8-amino-7-oxononanoate synthase (392 aa).

Residue Arg-26 coordinates substrate. 112 to 113 contacts pyridoxal 5'-phosphate; sequence GF. His-137 provides a ligand contact to substrate. Ser-187, His-215, and Thr-241 together coordinate pyridoxal 5'-phosphate. Lys-244 carries the post-translational modification N6-(pyridoxal phosphate)lysine. Residue Thr-357 coordinates substrate.

The protein belongs to the class-II pyridoxal-phosphate-dependent aminotransferase family. BioF subfamily. Homodimer. Pyridoxal 5'-phosphate is required as a cofactor.

The enzyme catalyses 6-carboxyhexanoyl-[ACP] + L-alanine + H(+) = (8S)-8-amino-7-oxononanoate + holo-[ACP] + CO2. The protein operates within cofactor biosynthesis; biotin biosynthesis. Catalyzes the decarboxylative condensation of pimeloyl-[acyl-carrier protein] and L-alanine to produce 8-amino-7-oxononanoate (AON), [acyl-carrier protein], and carbon dioxide. The sequence is that of 8-amino-7-oxononanoate synthase from Photobacterium profundum (strain SS9).